The chain runs to 477 residues: MKVNLPAFERAGVMVVGDVMLDRYWYGPTCRISPEAPVPVVKVNTVEERPGGAANVAMNIASLGANARLVGLTGIDDAARALSKTLAEVNVKCDFVSVPTHPTITKLRVLSRNQQLIRLDFEEGFEGVDPQPLHERINQALGSIGALVLSDYAKGALTSVQTMISLARQAGVPVLIDPKGTDFERYRGATLLTPNLSEFEAVAGKCKSEDELVERGMKLIADYDLSALLVTRSEQGMTLLQPNKAPLHMPTQAQEVYDVTGAGDTVIGVLAATLAAGNTLEEACYFANAAAGVVVGKLGTSTVSPIELENAVRGRADTGFGVMTEEELRQAVASARKRGEKVVMTNGVFDILHAGHVSYLANARKLGDRLIVAVNSDASTKRLKGESRPVNPLEQRMIVLGALESVDWIVSFEEDTPQRLIAGILPDLLVKGGDYKPEEIAGSEEVWANGGEVMVLNFEDGCSTTNIIKKIQTESEK.

The ribokinase stretch occupies residues 1–318; the sequence is MKVNLPAFER…ENAVRGRADT (318 aa). 195–198 serves as a coordination point for ATP; it reads NLSE. D264 is an active-site residue. The interval 344–477 is cytidylyltransferase; the sequence is MTNGVFDILH…IKKIQTESEK (134 aa).

The protein in the N-terminal section; belongs to the carbohydrate kinase PfkB family. It in the C-terminal section; belongs to the cytidylyltransferase family. As to quaternary structure, homodimer.

It carries out the reaction D-glycero-beta-D-manno-heptose 7-phosphate + ATP = D-glycero-beta-D-manno-heptose 1,7-bisphosphate + ADP + H(+). The enzyme catalyses D-glycero-beta-D-manno-heptose 1-phosphate + ATP + H(+) = ADP-D-glycero-beta-D-manno-heptose + diphosphate. The protein operates within nucleotide-sugar biosynthesis; ADP-L-glycero-beta-D-manno-heptose biosynthesis; ADP-L-glycero-beta-D-manno-heptose from D-glycero-beta-D-manno-heptose 7-phosphate: step 1/4. It participates in nucleotide-sugar biosynthesis; ADP-L-glycero-beta-D-manno-heptose biosynthesis; ADP-L-glycero-beta-D-manno-heptose from D-glycero-beta-D-manno-heptose 7-phosphate: step 3/4. Catalyzes the phosphorylation of D-glycero-D-manno-heptose 7-phosphate at the C-1 position to selectively form D-glycero-beta-D-manno-heptose-1,7-bisphosphate. Functionally, catalyzes the ADP transfer from ATP to D-glycero-beta-D-manno-heptose 1-phosphate, yielding ADP-D-glycero-beta-D-manno-heptose. In Salmonella paratyphi A (strain ATCC 9150 / SARB42), this protein is Bifunctional protein HldE.